Reading from the N-terminus, the 871-residue chain is Protein translocase subunit SecA (871 aa).

Residues Q80, 98 to 102 (GEGKT), and D537 each bind ATP. The tract at residues 852–871 (MEKGKKKGGSHGLGKIRVKR) is disordered. The span at 855–871 (GKKKGGSHGLGKIRVKR) shows a compositional bias: basic residues.

It belongs to the SecA family. In terms of assembly, monomer and homodimer. Part of the essential Sec protein translocation apparatus which comprises SecA, SecYEG and auxiliary proteins SecDF. Other proteins may also be involved.

The protein resides in the cell inner membrane. It localises to the cytoplasm. It catalyses the reaction ATP + H2O + cellular proteinSide 1 = ADP + phosphate + cellular proteinSide 2.. Functionally, part of the Sec protein translocase complex. Interacts with the SecYEG preprotein conducting channel. Has a central role in coupling the hydrolysis of ATP to the transfer of proteins into and across the cell membrane, serving as an ATP-driven molecular motor driving the stepwise translocation of polypeptide chains across the membrane. The protein is Protein translocase subunit SecA of Thermotoga neapolitana (strain ATCC 49049 / DSM 4359 / NBRC 107923 / NS-E).